Consider the following 236-residue polypeptide: MTRNWKVSKYQTVTSIKYFISFILFVLITNHVSSRILLRPCAEYLWNMRQTDIFINSSQEERAFLELQRFEDKTRFEILIGEAPQLNTQSFNKKIQEKAIELAKYSNEESIDSIANVFADLLSLCIFVLALLLGKKEIAVIKNLVNTLIYSLTDATKSFFIILFTDIFVGFHSSHGWEILIEVFLKHLGLPENKDFIFLFVATFPVVLDTVFKYWIFLYLNKISPSAVATFHNMNE.

The next 4 membrane-spanning stretches (helical) occupy residues 12–32 (TVTSIKYFISFILFVLITNHV), 114–134 (IANVFADLLSLCIFVLALLLG), 161–181 (IILFTDIFVGFHSSHGWEILI), and 196–216 (FIFLFVATFPVVLDTVFKYWI).

The protein belongs to the CemA family.

The protein resides in the plastid. Its subcellular location is the chloroplast inner membrane. The enzyme catalyses K(+)(in) + H(+)(out) = K(+)(out) + H(+)(in). Its function is as follows. Contributes to K(+)/H(+) antiport activity by supporting proton efflux to control proton extrusion and homeostasis in chloroplasts in a light-dependent manner to modulate photosynthesis. Prevents excessive induction of non-photochemical quenching (NPQ) under continuous-light conditions. Indirectly promotes efficient inorganic carbon uptake into chloroplasts. In Chlorokybus atmophyticus (Soil alga), this protein is Potassium/proton antiporter CemA.